Consider the following 335-residue polypeptide: Heat-inducible transcription repressor HrcA (335 aa).

Belongs to the HrcA family.

In terms of biological role, negative regulator of class I heat shock genes (grpE-dnaK-dnaJ and groELS operons). Prevents heat-shock induction of these operons. The protein is Heat-inducible transcription repressor HrcA of Mesomycoplasma hyopneumoniae (strain 232) (Mycoplasma hyopneumoniae).